A 125-amino-acid chain; its full sequence is Small ribosomal subunit protein uS12m (125 aa).

Disordered regions lie at residues 1–23 and 104–125; these read MPTL…RTRA and LMGI…PKSI. The segment covering 10 to 23 has biased composition (basic and acidic residues); sequence HGREEKRRTDRTRA.

The protein belongs to the universal ribosomal protein uS12 family.

Its subcellular location is the mitochondrion. Protein S12 is involved in the translation initiation step. The chain is Small ribosomal subunit protein uS12m (RPS12) from Raphanus sativus (Radish).